The chain runs to 311 residues: m7GpppX diphosphatase (311 aa).

Residues Glu-159, Lys-181, and 242–253 (HYQPSFYHLHVH) contribute to the substrate site. The Histidine triad motif signature appears at 249 to 253 (HLHVH). His-251 (nucleophile) is an active-site residue.

The protein belongs to the HIT family. In terms of tissue distribution, expressed in neurons in the ventral cord, the nerve ring and the pharynx.

It is found in the nucleus. The catalysed reaction is a 5'-end (N(7)-methyl 5'-triphosphoguanosine)-ribonucleoside in mRNA + H2O = N(7)-methyl-GMP + a 5'-end diphospho-ribonucleoside in mRNA + 2 H(+). The enzyme catalyses a 5'-end (N(2),N(2),N(7)-trimethyl 5'-triphosphoguanosine)-ribonucleoside in mRNA + H2O = (N(2),N(2),N(7))-trimethyl-GMP + a 5'-end diphospho-ribonucleoside in mRNA + 2 H(+). With respect to regulation, the hydrolytic product 7-methylguanosine diphosphate (m7GDP) efficiently inhibits the decapping scavenger activity and acts as a competitive inhibitor in vitro. Decapping scavenger enzyme that catalyzes the cleavage of a residual cap structure following the degradation of mRNAs of the 3'-&gt;5' exosome-mediated mRNA decay pathway. Hydrolyzes cap analog structures like 7-methylguanosine nucleoside triphosphate (m7GpppG) and tri-methyl guanosine nucleoside triphosphate (m3(2,2,7)GpppG) with up to 2 nucleotide substrates (small capped oligoribonucleotides) and specifically releases 5'-phosphorylated RNA fragments and 7-methylguanosine monophosphate (m7GMP). Does not hydrolyze unmethylated cap analog (GpppG) and shows no decapping activity on intact m7GpppG-capped mRNA molecules. Does not hydrolyze 7-methylguanosine diphosphate (m7GDP) and tri-methylguanosine diphosphate (m3(2,2,7)GDP) to m(7)GMP and m3(2,2,7)GMP, respectively. May also play a role in the 5'-&gt;3 mRNA decay pathway; m7GDP, the downstream product released by the 5'-&gt;3' mRNA mediated decapping activity, may be also converted by dcs-1 to m7GMP. Binds to m7GpppG and strongly to m7GDP. This Caenorhabditis elegans protein is m7GpppX diphosphatase (dcs-1).